Reading from the N-terminus, the 211-residue chain is tRNA (guanine-N(7)-)-methyltransferase (211 aa).

Residues Glu44, Asp69, Asp96, and Asp118 each coordinate S-adenosyl-L-methionine. The active site involves Asp118. Lys122 provides a ligand contact to substrate. The tract at residues 124 to 129 (KHEKRR) is interaction with RNA. Substrate contacts are provided by residues Asp154 and 191-194 (TEYE).

It belongs to the class I-like SAM-binding methyltransferase superfamily. TrmB family.

The catalysed reaction is guanosine(46) in tRNA + S-adenosyl-L-methionine = N(7)-methylguanosine(46) in tRNA + S-adenosyl-L-homocysteine. It participates in tRNA modification; N(7)-methylguanine-tRNA biosynthesis. Its function is as follows. Catalyzes the formation of N(7)-methylguanine at position 46 (m7G46) in tRNA. The polypeptide is tRNA (guanine-N(7)-)-methyltransferase (Streptococcus pyogenes serotype M12 (strain MGAS2096)).